Consider the following 388-residue polypeptide: Na(+)/H(+) antiporter NhaA (388 aa).

11 helical membrane passes run 14–34 (GGII…MGAT), 59–79 (MLLW…GLEV), 95–115 (AFPV…YLAF), 125–145 (GWAI…ALLG), 154–174 (IFLM…IALF), 179–199 (LSIV…LLNL), 219–239 (VLKS…FIPL), 254–274 (VLHP…NAGV), 292–312 (IIAG…WLAL), 328–348 (IMAV…IASL), and 360–380 (WAKL…YSWL).

It belongs to the NhaA Na(+)/H(+) (TC 2.A.33) antiporter family.

It is found in the cell inner membrane. The catalysed reaction is Na(+)(in) + 2 H(+)(out) = Na(+)(out) + 2 H(+)(in). In terms of biological role, na(+)/H(+) antiporter that extrudes sodium in exchange for external protons. This Salmonella paratyphi A (strain ATCC 9150 / SARB42) protein is Na(+)/H(+) antiporter NhaA.